We begin with the raw amino-acid sequence, 528 residues long: Protein spinster homolog 1 (528 aa).

The segment at 1–38 (MAGSDTAPFLSQADDPDDGPAPGHPGLPGPMGNPKSGE) is disordered. Ala2 bears the N-acetylalanine mark. 12 helical membrane passes run 60-80 (LIVV…FTVA), 98-118 (GLIQ…FGYL), 126-146 (YLMC…SFIP), 160-180 (VGVG…DLFV), 187-207 (MLSI…IAGS), 218-238 (WALR…FLVV), 278-298 (LGFT…PAFL), 323-343 (LIFG…GVEI), 357-377 (LVCA…LACA), 381-401 (IVAT…NWAI), 421-441 (FQIV…IGLI), and 465-485 (MLCA…AMFI). At Ser518 the chain carries Phosphoserine.

This sequence belongs to the major facilitator superfamily. Spinster (TC 2.A.1.49) family. In terms of assembly, interacts with BCL2 and BCL2L1.

The protein localises to the lysosome membrane. The enzyme catalyses a 1-acyl-sn-glycero-3-phosphocholine(out) + H(+)(out) = a 1-acyl-sn-glycero-3-phosphocholine(in) + H(+)(in). The catalysed reaction is 1-hexadecanoyl-sn-glycero-3-phosphocholine(out) + H(+)(out) = 1-hexadecanoyl-sn-glycero-3-phosphocholine(in) + H(+)(in). It carries out the reaction 1-(9Z-octadecenoyl)-sn-glycero-3-phosphocholine(out) + H(+)(out) = 1-(9Z-octadecenoyl)-sn-glycero-3-phosphocholine(in) + H(+)(in). It catalyses the reaction 1-(5Z,8Z,11Z,14Z-eicosatetraenoyl)-sn-glycero-3-phosphocholine(out) + H(+)(out) = 1-(5Z,8Z,11Z,14Z-eicosatetraenoyl)-sn-glycero-3-phosphocholine(in) + H(+)(in). The enzyme catalyses 1-(4Z,7Z,10Z,13Z,16Z,19Z-docosahexaenoyl)-sn-glycero-3-phosphocholine(out) + H(+)(out) = 1-(4Z,7Z,10Z,13Z,16Z,19Z-docosahexaenoyl)-sn-glycero-3-phosphocholine(in) + H(+)(in). The catalysed reaction is a 1-acyl-sn-glycero-3-phosphoethanolamine(out) + H(+)(out) = a 1-acyl-sn-glycero-3-phosphoethanolamine(in) + H(+)(in). It carries out the reaction 1-(9Z-octadecenoyl)-sn-glycero-3-phosphoethanolamine(out) + H(+)(out) = 1-(9Z-octadecenoyl)-sn-glycero-3-phosphoethanolamine(in) + H(+)(in). It catalyses the reaction 1-acyl-sn-glycero-3-phospho-(1'-sn-glycerol)(out) + H(+)(out) = 1-acyl-sn-glycero-3-phospho-(1'-sn-glycerol)(in) + H(+)(in). The enzyme catalyses 1-(9Z-octadecenoyl)-sn-glycero-3-phospho-(1'-sn-glycerol)(out) + H(+)(out) = 1-(9Z-octadecenoyl)-sn-glycero-3-phospho-(1'-sn-glycerol)(in) + H(+)(in). The catalysed reaction is a 1-O-(1Z-alkenyl)-sn-glycero-3-phosphocholine(out) + H(+)(out) = a 1-O-(1Z-alkenyl)-sn-glycero-3-phosphocholine(in) + H(+)(in). It carries out the reaction 1-(1Z-hexadecenyl)-sn-glycero-3-phosphocholine(out) + H(+)(out) = 1-(1Z-hexadecenyl)-sn-glycero-3-phosphocholine(in) + H(+)(in). It catalyses the reaction a 1-O-(1Z-alkenyl)-sn-glycero-3-phosphoethanolamine(out) + H(+)(out) = a 1-O-(1Z-alkenyl)-sn-glycero-3-phosphoethanolamine(in) + H(+)(in). The enzyme catalyses 1-O-(1Z-hexadecenyl)-sn-glycero-3-phosphoethanolamine(out) + H(+)(out) = 1-O-(1Z-hexadecenyl)-sn-glycero-3-phosphoethanolamine(in) + H(+)(in). Its function is as follows. Plays a critical role in the phospholipid salvage pathway from lysosomes to the cytosol. Mediates the rate-limiting, proton-dependent, lysosomal efflux of lysophospholipids, which can then be reacylated by acyltransferases in the endoplasmic reticulum to form phospholipids. Selective for zwitterionic headgroups such as lysophosphatidylcholine (LPC) and lysophosphatidylethanolamine (LPE), can also transport lysophosphatidylglycerol (LPG), but not other anionic lysophospholipids, sphingosine, nor sphingomyelin. Transports lysophospholipids with saturated, monounsaturated, and polyunsaturated fatty acids, such as 1-hexadecanoyl-sn-glycero-3-phosphocholine, 1-(9Z-octadecenoyl)-sn-glycero-3-phosphocholine and 1-(4Z,7Z,10Z,13Z,16Z,19Z-docosahexaenoyl)-sn-glycero-3-phosphocholine, respectively. Can also transport lysoplasmalogen (LPC with a fatty alcohol) such as 1-(1Z-hexadecenyl)-sn-glycero-3-phosphocholine. Essential player in lysosomal homeostasis. Crucial for cell survival under conditions of nutrient limitation. May be involved in necrotic or autophagic cell death. The polypeptide is Protein spinster homolog 1 (Spns1) (Rattus norvegicus (Rat)).